A 130-amino-acid polypeptide reads, in one-letter code: Con-Ins G2 (130 aa).

Residues 1–24 (MTTSSYFLLVALGLLLYVRQSFST) form the signal peptide. Disulfide bonds link C29–C100, C41–C103, C53–C116, and C102–C107. At P34 the chain carries 4-hydroxyproline; partial. The segment at 54-74 (EEEEARRGGTNDGGKKRRRAS) is disordered. A propeptide spans 59-92 (RRGGTNDGGKKRRRASPLWKRRRFLSMLKARAKR) (c peptide). 4-carboxyglutamate; partial is present on E111.

This sequence belongs to the insulin family. Heterodimer of A and B chains; disulfide-linked. In terms of tissue distribution, expressed by the venom gland.

The protein localises to the secreted. In terms of biological role, this venom insulin, from a fish-hunting cone snail, facilitates prey capture by rapidly inducing hypoglycemic shock. Intraperitoneal injection of this peptide into zebrafish lowers blood glucose with the same potency than human insulin. In vivo, when applied to water, this peptide reduces overall locomotor activity of zebrafish larvae, observed as a significant decrease in the percentage of time spent swimming and movement frequency. In Conus geographus (Geography cone), this protein is Con-Ins G2.